Here is a 166-residue protein sequence, read N- to C-terminus: Probable dual specificity protein phosphatase H1 homolog (166 aa).

In terms of domain architecture, Tyrosine-protein phosphatase spans 25-166 (DITKITDYVY…FLNQIIDKYI (142 aa)). Catalysis depends on C108, which acts as the Phosphocysteine intermediate.

Belongs to the protein-tyrosine phosphatase family. Non-receptor class dual specificity subfamily. Homodimer.

It is found in the virion. It localises to the host cytoplasm. The enzyme catalyses O-phospho-L-tyrosyl-[protein] + H2O = L-tyrosyl-[protein] + phosphate. It catalyses the reaction O-phospho-L-seryl-[protein] + H2O = L-seryl-[protein] + phosphate. Serine/Tyrosine phosphatase which down-regulates cellular antiviral response by dephosphorylating activated STAT1 and blocking interferon (IFN)-stimulated innate immune responses. The chain is Probable dual specificity protein phosphatase H1 homolog from Vertebrata (FPV).